A 311-amino-acid polypeptide reads, in one-letter code: MADVLSVGVNLEAFSQAISAIQALRSSVSRVFDCLKDGMRNKETLEGREKAFIAHFQDNLHSVNRDLNELERLSNLVGKPSENHPLHNSGLLSLDPVQDKTPLYSQLLQAYKWSNKLQYHAGLASGLLNQQSLKRSANQMGVSAKRRPKAQPTTLVLPPQYVDDVISRIDRMFPEMSIHLSRPNGTSAMLLVTLGKVLKVIVVMRSLFIDRTIVKGYNENVYTEDGKLDIWSKSNYQVFQKVTDHATTALLHYQLPQMPDVVVRSFMTWLRSYIKLFQAPCQRCGKFLQDGLPPTWRDFRTLEAFHDTCRQ.

S132 is subject to Phosphoserine. The residue at position 134 (K134) is an N6-methyllysine.

The protein belongs to the Mediator complex subunit 27 family. In terms of assembly, component of the Mediator complex, which is composed of MED1, MED4, MED6, MED7, MED8, MED9, MED10, MED11, MED12, MED13, MED13L, MED14, MED15, MED16, MED17, MED18, MED19, MED20, MED21, MED22, MED23, MED24, MED25, MED26, MED27, MED29, MED30, MED31, CCNC, CDK8 and CDC2L6/CDK11. The MED12, MED13, CCNC and CDK8 subunits form a distinct module termed the CDK8 module. Mediator containing the CDK8 module is less active than Mediator lacking this module in supporting transcriptional activation. Individual preparations of the Mediator complex lacking one or more distinct subunits have been variously termed ARC, CRSP, DRIP, PC2, SMCC and TRAP.

It localises to the nucleus. Functionally, component of the Mediator complex, a coactivator involved in the regulated transcription of nearly all RNA polymerase II-dependent genes. Mediator functions as a bridge to convey information from gene-specific regulatory proteins to the basal RNA polymerase II transcription machinery. Mediator is recruited to promoters by direct interactions with regulatory proteins and serves as a scaffold for the assembly of a functional preinitiation complex with RNA polymerase II and the general transcription factors. The chain is Mediator of RNA polymerase II transcription subunit 27 (MED27) from Sus scrofa (Pig).